We begin with the raw amino-acid sequence, 725 residues long: Another transcription unit protein (725 aa).

The segment covering 1-10 has biased composition (acidic residues); the sequence is MGSQNSDDDS. Disordered regions lie at residues 1–379, 566–603, and 617–725; these read MGSQ…PETR, RQAM…EGSD, and YKKG…SDND. Over residues 11–70 the composition is skewed to low complexity; that stretch reads GSSGSSRSGSRSVTPQGGSAPGSQRSRRSGSGSDRSRSGSRSSRSRSGSGSPRSARSGSA. Over residues 82–101 the composition is skewed to basic residues; it reads RSKRSRSAHSRRSGSARSRK. The span at 104-116 shows a compositional bias: polar residues; it reads TPESPQSHRSGSL. A compositionally biased stretch (low complexity) spans 117–140; it reads QSRKSGSPQSRRSGSPQSRKSGST. Over residues 141 to 160 the composition is skewed to basic residues; that stretch reads HSRRSGSAHSRRSGSARSRK. Phosphoserine occurs at positions 175, 186, 188, and 190. Positions 206–223 are enriched in basic residues; the sequence is SRSRSRSRSGSRTSRSRS. The span at 224-242 shows a compositional bias: low complexity; the sequence is KTGTPSPNRSRSGSASGSG. 3 positions are modified to phosphoserine: Ser-265, Ser-267, and Ser-269. Residue Thr-286 is modified to Phosphothreonine. 3 positions are modified to phosphoserine: Ser-288, Ser-290, and Ser-312. Acidic residues predominate over residues 306–318; sequence GDADDISDDEDEA. Residues 325-353 show a composition bias toward basic residues; the sequence is SPVRSKSRSQSKSHSHSRSMSHSRSRSRS. Residues 354–369 are compositionally biased toward basic and acidic residues; it reads RSRDKVESQVESAPKE. Ser-355 carries the phosphoserine modification. The span at 571 to 582 shows a compositional bias: basic residues; that stretch reads NQHKSLPKKKKP. Residue Thr-593 is modified to Phosphothreonine. Ser-595, Ser-602, and Ser-631 each carry phosphoserine. Residue Thr-632 is modified to Phosphothreonine. A phosphoserine mark is found at Ser-635, Ser-636, and Ser-642. A compositionally biased stretch (basic and acidic residues) spans 644 to 665; sequence FEARRSKKVDKAKASKALRDSD. The segment covering 710–725 has biased composition (gly residues); sequence SGSGSGSGSGSGSDND.

The polypeptide is Another transcription unit protein (Atu) (Drosophila melanogaster (Fruit fly)).